The chain runs to 713 residues: Nucleoporin NUP82 (713 aa).

The tract at residues 1 to 409 (MSQSSRLSAL…SDLNPLAGLK (409 aa)) is interaction with NUP116. Positions 463–713 (TSISTEKSDT…VSQEFTTKTQ (251 aa)) are interaction with NSP1 and NUP159. Residues 582 to 713 (EAQNKKWDAQ…VSQEFTTKTQ (132 aa)) adopt a coiled-coil conformation. A Bipartite nuclear localization signal motif is present at residues 607 to 623 (KKLSQIAESNKFKEKKI).

Component of the nuclear pore complex (NPC). NPC constitutes the exclusive means of nucleocytoplasmic transport. NPCs allow the passive diffusion of ions and small molecules and the active, nuclear transport receptor-mediated bidirectional transport of macromolecules such as proteins, RNAs, ribonucleoparticles (RNPs), and ribosomal subunits across the nuclear envelope. Due to its 8-fold rotational symmetry, all subunits are present with 8 copies or multiples thereof. NUP82 is part of the NUP82 subcomplex. This subcomplex is the base for interactions with NUP116 and GLE2, with NUP42 and GLE1 and with DYN2.

Its subcellular location is the nucleus. It localises to the nuclear pore complex. It is found in the nucleus membrane. Its function is as follows. Functions as a component of the nuclear pore complex (NPC). NPC components, collectively referred to as nucleoporins (NUPs), can play the role of both NPC structural components and of docking or interaction partners for transiently associated nuclear transport factors. It is specifically involved as part of the NUP82-NUP159-NSP1 subcomplex in nuclear mRNA and pre-ribosome export by acting as a linker tethering nucleoporins that are directly involved in nuclear transport to the NPC via its coiled-coil domain. The sequence is that of Nucleoporin NUP82 (NUP82) from Saccharomyces cerevisiae (strain ATCC 204508 / S288c) (Baker's yeast).